The chain runs to 314 residues: 2,3-dihydroxyphenylpropionate/2,3-dihydroxicinnamic acid 1,2-dioxygenase (314 aa).

His-115 acts as the Proton donor in catalysis. The active-site Proton acceptor is His-179.

This sequence belongs to the LigB/MhpB extradiol dioxygenase family. As to quaternary structure, homotetramer. It depends on Fe(2+) as a cofactor.

It catalyses the reaction 3-(2,3-dihydroxyphenyl)propanoate + O2 = (2Z,4E)-2-hydroxy-6-oxonona-2,4-dienedioate + H(+). It carries out the reaction (2E)-3-(2,3-dihydroxyphenyl)prop-2-enoate + O2 = (2Z,4E,7E)-2-hydroxy-6-oxonona-2,4,7-trienedioate + H(+). The protein operates within aromatic compound metabolism; 3-phenylpropanoate degradation. Its function is as follows. Catalyzes the non-heme iron(II)-dependent oxidative cleavage of 2,3-dihydroxyphenylpropionic acid and 2,3-dihydroxicinnamic acid into 2-hydroxy-6-ketononadienedioate and 2-hydroxy-6-ketononatrienedioate, respectively. This chain is 2,3-dihydroxyphenylpropionate/2,3-dihydroxicinnamic acid 1,2-dioxygenase, found in Rhodococcus globerulus.